The primary structure comprises 590 residues: Regulatory solute carrier protein family 1 member 1 (590 aa).

Disordered stretches follow at residues 1–116 (MSSS…TQGL), 144–234 (EEGW…PDSE), 277–331 (SPSS…AEES), and 359–466 (EEVT…SHRT). Polar residues predominate over residues 16–35 (SSGQSPEAGNPTSLARSVSA). The span at 78–91 (SPCAAAAAPSSAMP) shows a compositional bias: low complexity. A compositionally biased stretch (polar residues) spans 150-161 (ENQNPSQVNDLQ). Basic and acidic residues-rich tracts occupy residues 162–179 (QHQE…RDAP) and 188–203 (PGER…REAT). Low complexity predominate over residues 313–331 (SSSSVCGSSQPPAESAEES). Polar residues predominate over residues 362-376 (TCQSEGTAWGQTRVN). 2 stretches are compositionally biased toward basic and acidic residues: residues 380–395 (RWTE…DRPQ) and 404–420 (VKTE…RIED). Polar residues predominate over residues 451–465 (SVTVTSAETSNQSHR). Positions 544-584 (GFPAADIDRILRAGFTLQEALGALHRVGGNADLALLVLLAK) constitute a UBA domain.

In terms of assembly, interacts with YRDC. As to expression, highly expressed in renal outer medulla, renal inner medulla, duodenum, ileum and jejunum. Moderately expressed in renal outer cortex, renal papilla, brain and liver.

It localises to the cell membrane. It is found in the nucleus. Its subcellular location is the golgi apparatus. The protein resides in the trans-Golgi network. Mediates transcriptional and post-transcriptional regulation of SLC5A1. Inhibits a dynamin and PKC-dependent exocytotic pathway of SLC5A1. Also involved in transcriptional regulation of SLC22A2. Exhibits glucose-dependent, short-term inhibition of SLC5A1 and SLC22A2 by inhibiting the release of vesicles from the trans-Golgi network. This is Regulatory solute carrier protein family 1 member 1 (RSC1A1) from Oryctolagus cuniculus (Rabbit).